Here is a 294-residue protein sequence, read N- to C-terminus: 4-hydroxy-tetrahydrodipicolinate synthase (294 aa).

Thr-49 is a binding site for pyruvate. Tyr-136 serves as the catalytic Proton donor/acceptor. Lys-164 acts as the Schiff-base intermediate with substrate in catalysis. Residue Ile-207 coordinates pyruvate.

The protein belongs to the DapA family. As to quaternary structure, homotetramer; dimer of dimers.

Its subcellular location is the cytoplasm. It carries out the reaction L-aspartate 4-semialdehyde + pyruvate = (2S,4S)-4-hydroxy-2,3,4,5-tetrahydrodipicolinate + H2O + H(+). It participates in amino-acid biosynthesis; L-lysine biosynthesis via DAP pathway; (S)-tetrahydrodipicolinate from L-aspartate: step 3/4. In terms of biological role, catalyzes the condensation of (S)-aspartate-beta-semialdehyde [(S)-ASA] and pyruvate to 4-hydroxy-tetrahydrodipicolinate (HTPA). In Natronomonas pharaonis (strain ATCC 35678 / DSM 2160 / CIP 103997 / JCM 8858 / NBRC 14720 / NCIMB 2260 / Gabara) (Halobacterium pharaonis), this protein is 4-hydroxy-tetrahydrodipicolinate synthase.